A 929-amino-acid chain; its full sequence is MTTEFVRQDLAQNSSTAAEPDRVRVIREGVASYLPDIDTEETAEWLESFDELLERSGPARARYLMLRLLERAGEQRVAIPALTSTDYVNTIPTELEPWFPGDEDVERRYRAWIRWNAAIMVHRAQRPGVGVGGHISTYASSATLYEVGFNHFFRGKSHPGGGDHVFIQGHASPGIYARAFLEGRLTTDQLDGFRQEHSHSGGGLPSYPHPRLMPDFWEFPTVSMGLGPMNAIYQARFNHYLHDRGIKDTSDQHVWAFLGDGEMDEPESRGLIQVAANEALDNLTFVINCNLQRLDGPVRGNGKIIQELESFFRGAGWNVIKVVWGREWDVLLHADRDGALVNLMNSTPDGDYQTYKANDGAYVRDHFFGRDPRTKALVADMSDQEIWNLKRGGHDYRKVYAAYRAAMEHKGQPTVILAKTIKGYTLGQHFEGRNATHQMKKLALEDLKNFRDVTRVPVSDAQLEEDPYLPPYYHPGPEAPEIRYLLERRRALGGFVPSRRTKSKPLALPGSDTYKALKKGSGSQAVATTMATVRTFKELLRDKNIGPRIVPIIPDEARTFGMDSWFPSLKIYNRNGQLYTSVDSELMLAYKESEVGQILHEGINEAGSTSSFTAVGTSYSTHDEPMIPIYIFYSMFGFQRTGDGLWAAADQMARGFVLGATAGRTTLTGEGLQHADGHSLLLASTNPAAVTYDPAFAYEIAHIIESGLQRMYGEDPENVFFYLTIYNEPYQQPAEPENLDVEALLKGLYLYRPAPEKRAKSAQILASGVAMPEALRAADLLASDWDVAADVWSVTSWGELNREGVAIEKHRLRHPDEPAGTPHVTSALADAAGPVIAVSDWMRAVPEQIRPWVPGTYVTLGTDGFGFSDTRPAARRYFNTDAESVVVAVLQGLARDGEIDASVAAQAAEQYRIDDVSAAGVSYADTGSA.

K375 is covalently cross-linked (Isoglutamyl lysine isopeptide (Lys-Gln) (interchain with Q-Cter in protein Pup)).

In terms of assembly, homodimer. Part of the PDH complex, consisting of multiple copies of AceE (E1), DlaT (E2) and Lpd (E3). The cofactor is Mg(2+). It depends on thiamine diphosphate as a cofactor.

It carries out the reaction N(6)-[(R)-lipoyl]-L-lysyl-[protein] + pyruvate + H(+) = N(6)-[(R)-S(8)-acetyldihydrolipoyl]-L-lysyl-[protein] + CO2. Functionally, component of the pyruvate dehydrogenase (PDH) complex, that catalyzes the overall conversion of pyruvate to acetyl-CoA and CO(2). AceE has reductase activity with pyruvate but does not react with 2-oxoglutarate. In Mycolicibacterium smegmatis (strain ATCC 700084 / mc(2)155) (Mycobacterium smegmatis), this protein is Pyruvate dehydrogenase E1 component (aceE).